The chain runs to 398 residues: MSHKRPQSSAGESNGAVDLKTPRFDPVSLGLPAEFQLTDYTRLKGCSCKLPQPKLLALLQELSATPGQKDVGMDCSIVPLHHTNSKGEALFLVSTTDFFFPSVSDPFLQGQIGAANVLSDLYSMGIPDCDTMLMLLAASTEMDEHERLITTREIMKGFAERARLATTTVTGGQTVMNPWPLIGGVAMAVVSEAEMVRPTGLLCAGDILVLTKPLGCQVAVNLKQWLLRPSPLYEEAIAGHISPEEIEELYNMATDSMRRLNREGARLMRKHGAHGATDVTGFGILGHANNFGAAQAVGDAPRSLCLVLERLPMFKTAVAASKQMNDKYRLLEGYSAETSGGLLVAFPSTTAAAAFCAELTAVDGGCPSWIVGHVEDRATNAVDGVYARLKDGYEIVEV.

The disordered stretch occupies residues 1–21; that stretch reads MSHKRPQSSAGESNGAVDLKT. Cys-46 is a catalytic residue. ATP-binding positions include Lys-49, 72–74, Asp-97, Asp-120, and 171–174; these read GMD and GGQT. Asp-74 lines the Mg(2+) pocket. Asp-120 is a Mg(2+) binding site. Mg(2+) is bound at residue Asp-278.

The protein belongs to the selenophosphate synthase 1 family. Class I subfamily. In terms of assembly, homodimer. The cofactor is Mg(2+).

The enzyme catalyses hydrogenselenide + ATP + H2O = selenophosphate + AMP + phosphate + 2 H(+). Its function is as follows. Synthesizes selenophosphate from selenide and ATP. The polypeptide is Selenide, water dikinase (Leishmania major).